We begin with the raw amino-acid sequence, 359 residues long: 3-dehydroquinate synthase (359 aa).

NAD(+) is bound by residues 71–76 (DGEQYK), 105–109 (GVIGD), 129–130 (TT), Lys-142, Lys-151, and 169–172 (CLST). Zn(2+)-binding residues include Glu-184, His-247, and His-264.

Belongs to the sugar phosphate cyclases superfamily. Dehydroquinate synthase family. Co(2+) serves as cofactor. It depends on Zn(2+) as a cofactor. Requires NAD(+) as cofactor.

Its subcellular location is the cytoplasm. It carries out the reaction 7-phospho-2-dehydro-3-deoxy-D-arabino-heptonate = 3-dehydroquinate + phosphate. Its pathway is metabolic intermediate biosynthesis; chorismate biosynthesis; chorismate from D-erythrose 4-phosphate and phosphoenolpyruvate: step 2/7. Functionally, catalyzes the conversion of 3-deoxy-D-arabino-heptulosonate 7-phosphate (DAHP) to dehydroquinate (DHQ). The sequence is that of 3-dehydroquinate synthase from Shewanella pealeana (strain ATCC 700345 / ANG-SQ1).